Consider the following 163-residue polypeptide: Cyclic pyranopterin monophosphate synthase (163 aa).

Substrate contacts are provided by residues 79 to 81 (LCH) and 117 to 118 (ME). Asp-132 is a catalytic residue.

The protein belongs to the MoaC family. As to quaternary structure, homohexamer; trimer of dimers.

It catalyses the reaction (8S)-3',8-cyclo-7,8-dihydroguanosine 5'-triphosphate = cyclic pyranopterin phosphate + diphosphate. It functions in the pathway cofactor biosynthesis; molybdopterin biosynthesis. Its function is as follows. Catalyzes the conversion of (8S)-3',8-cyclo-7,8-dihydroguanosine 5'-triphosphate to cyclic pyranopterin monophosphate (cPMP). The sequence is that of Cyclic pyranopterin monophosphate synthase from Chloroflexus aurantiacus (strain ATCC 29366 / DSM 635 / J-10-fl).